The chain runs to 141 residues: ATP synthase epsilon chain, chloroplastic (141 aa).

Belongs to the ATPase epsilon chain family. In terms of assembly, F-type ATPases have 2 components, F(1) - the catalytic core - and F(0) - the membrane proton channel. F(1) has five subunits: alpha(3), beta(3), gamma(1), delta(1), epsilon(1). F(0) has four main subunits: a(1), b(1), b'(1) and c(10-14). The alpha and beta chains form an alternating ring which encloses part of the gamma chain. F(1) is attached to F(0) by a central stalk formed by the gamma and epsilon chains, while a peripheral stalk is formed by the delta, b and b' chains.

The protein resides in the plastid. It localises to the chloroplast thylakoid membrane. Its function is as follows. F(1)F(0) ATP synthase produces ATP from ADP in the presence of a proton or sodium gradient. F-type ATPases consist of two structural domains, F(1) containing the extramembraneous catalytic core and F(0) containing the membrane proton channel, linked together by a central stalk and a peripheral stalk. During catalysis, ATP synthesis in the catalytic domain of F(1) is coupled via a rotary mechanism of the central stalk subunits to proton translocation. This Chlamydomonas reinhardtii (Chlamydomonas smithii) protein is ATP synthase epsilon chain, chloroplastic.